The following is a 744-amino-acid chain: Zinc finger protein 366 (744 aa).

A disordered region spans residues 206–228 (KQPPEPLLPRKAEPQESEETKQK). The span at 213-228 (LPRKAEPQESEETKQK) shows a compositional bias: basic and acidic residues. 11 C2H2-type zinc fingers span residues 253–275 (WQCP…ILGH), 281–303 (HACT…MLTH), 309–331 (HKCQ…MMQH), 337–359 (HNCR…EAKH), 365–387 (NICV…LTTH), 393–415 (YNCS…MMKH), 421–443 (YICS…SLTH), 449–471 (HKCG…VLIH), 477–499 (YQCH…MIVH), 505–527 (FKCK…MHLH), and 533–556 (FKCL…KVKH). The interaction with NRIP1 stretch occupies residues 455–744 (GREFTLLANM…MEKQAVLLGI (290 aa)). The PXDLS signature appears at 590–594 (PFDLS). Disordered regions lie at residues 603-627 (VFQS…NCYE) and 664-692 (KEEK…QERD).

In terms of assembly, interacts with ESR1 and NRIP1. Interacts (via PXDLS motif) with CTBP1. As to expression, expressed in immature and mature dendritic cells (DCs). Not detected in other blood cell types.

The protein localises to the nucleus. Its function is as follows. Has transcriptional repression activity. Acts as a corepressor of ESR1; the function seems to involve CTBP1 and histone deacetylases. This is Zinc finger protein 366 from Homo sapiens (Human).